The chain runs to 87 residues: Large ribosomal subunit protein bL31B (87 aa).

This sequence belongs to the bacterial ribosomal protein bL31 family. Type B subfamily. Part of the 50S ribosomal subunit.

The chain is Large ribosomal subunit protein bL31B from Burkholderia thailandensis (strain ATCC 700388 / DSM 13276 / CCUG 48851 / CIP 106301 / E264).